The following is a 130-amino-acid chain: Small ribosomal subunit protein uS9 (130 aa).

The interval 108–130 (PRMKERRKYGLKKARRAPQFSKR) is disordered. Residues 111–130 (KERRKYGLKKARRAPQFSKR) are compositionally biased toward basic residues.

It belongs to the universal ribosomal protein uS9 family.

The sequence is that of Small ribosomal subunit protein uS9 from Desulforamulus reducens (strain ATCC BAA-1160 / DSM 100696 / MI-1) (Desulfotomaculum reducens).